The sequence spans 627 residues: uncharacterized protein (627 aa).

Topologically, residues 1–32 (MVDDSNYLTPHETALAVVATAMKKARLQLDTL) are extracellular. Residues 33 to 53 (LINSILGGVLFSSGSFLLVAV) form a helical membrane-spanning segment. The Cytoplasmic segment spans residues 54–66 (YSEDPDIVARNPG). Residues 67 to 87 (IVNLITGVNFAMGLFYVVMMG) traverse the membrane as a helical segment. At 88–113 (ADLFNSNILFFSVGVLRKAVTIYDLM) the chain is on the extracellular side. Residues 114–134 (ISWVVSWLGNIAGSLFVSYLF) form a helical membrane-spanning segment. Topologically, residues 135–165 (GHLSGISSQKLWIIGSRQIIEQKVSYSFVQT) are cytoplasmic. Residues 166–186 (FLKGIACNFFVCLAIYLQLMA) traverse the membrane as a helical segment. At 187–192 (KPIHVK) the chain is on the extracellular side. Residues 193–213 (FILMSFPIIDFIGIGFTHVVG) form a helical membrane-spanning segment. Topologically, residues 214–218 (DMSAS) are cytoplasmic. A helical membrane pass occupies residues 219-239 (FIAMLNGANVSVGKYIWKLLI). At 240 to 245 (PASLGN) the chain is on the extracellular side. The chain crosses the membrane as a helical span at residues 246–266 (IVGGLFFSAVVPFYLHLVVVE). Over 267–627 (RDRKRLSLPE…FYNRHTSPQL (361 aa)) the chain is Cytoplasmic. The residue at position 305 (T305) is a Phosphothreonine. Residues 512–537 (PPILPRTTQDTFPHNAPASSPAYTDD) form a disordered region. The segment covering 517 to 533 (RTTQDTFPHNAPASSPA) has biased composition (polar residues). The residue at position 546 (S546) is a Phosphoserine. T588 is subject to Phosphothreonine. The span at 605 to 614 (STTRRQKITE) shows a compositional bias: basic and acidic residues. Positions 605–627 (STTRRQKITEPKNFYNRHTSPQL) are disordered.

It belongs to the FNT transporter (TC 1.A.16) family.

The protein resides in the membrane. This is an uncharacterized protein from Saccharomyces cerevisiae (strain ATCC 204508 / S288c) (Baker's yeast).